A 101-amino-acid polypeptide reads, in one-letter code: Apolipoprotein C-II (101 aa).

Positions 1–22 (MGTRYLLVLLLVLLVLGFEVQG) are cleaved as a signal peptide. Residues 66-74 (TMDEKIRDI) are lipid binding. The tract at residues 78–101 (STAAVSTYAGIFTDQLLSMLKGDS) is lipoprotein lipase cofactor.

The protein belongs to the apolipoprotein C2 family. In terms of processing, proapolipoprotein C-II is synthesized as a sialic acid containing glycoprotein which is subsequently desialylated prior to its proteolytic processing. Post-translationally, proapolipoprotein C-II, the major form found in plasma undergoes proteolytic cleavage of its N-terminal hexapeptide to generate apolipoprotein C-II, which occurs as the minor form in plasma. In terms of tissue distribution, highly expressed in the liver. Moderately expressed in the ileum, jejunum and ovary.

It localises to the secreted. Component of chylomicrons, very low-density lipoproteins (VLDL), low-density lipoproteins (LDL), and high-density lipoproteins (HDL) in plasma. Plays an important role in lipoprotein metabolism as an activator of lipoprotein lipase. Both proapolipoprotein C-II and apolipoprotein C-II can activate lipoprotein lipase. The chain is Apolipoprotein C-II (APOC2) from Canis lupus familiaris (Dog).